Consider the following 160-residue polypeptide: Aspartate carbamoyltransferase regulatory chain (160 aa).

Zn(2+) contacts are provided by Cys110, Cys115, Cys140, and Cys143.

The protein belongs to the PyrI family. In terms of assembly, contains catalytic and regulatory chains. Zn(2+) serves as cofactor.

Functionally, involved in allosteric regulation of aspartate carbamoyltransferase. This Hyperthermus butylicus (strain DSM 5456 / JCM 9403 / PLM1-5) protein is Aspartate carbamoyltransferase regulatory chain.